The primary structure comprises 228 residues: tRNA (guanine-N(1)-)-methyltransferase (228 aa).

Residues Gly-111 and 135-140 contribute to the S-adenosyl-L-methionine site; that span reads LGDYVL.

It belongs to the RNA methyltransferase TrmD family. In terms of assembly, homodimer.

It localises to the cytoplasm. The catalysed reaction is guanosine(37) in tRNA + S-adenosyl-L-methionine = N(1)-methylguanosine(37) in tRNA + S-adenosyl-L-homocysteine + H(+). In terms of biological role, specifically methylates guanosine-37 in various tRNAs. In Clavibacter sepedonicus (Clavibacter michiganensis subsp. sepedonicus), this protein is tRNA (guanine-N(1)-)-methyltransferase.